Here is a 347-residue protein sequence, read N- to C-terminus: S-adenosylmethionine:tRNA ribosyltransferase-isomerase (347 aa).

It belongs to the QueA family. Monomer.

The protein localises to the cytoplasm. It catalyses the reaction 7-aminomethyl-7-carbaguanosine(34) in tRNA + S-adenosyl-L-methionine = epoxyqueuosine(34) in tRNA + adenine + L-methionine + 2 H(+). It functions in the pathway tRNA modification; tRNA-queuosine biosynthesis. Its function is as follows. Transfers and isomerizes the ribose moiety from AdoMet to the 7-aminomethyl group of 7-deazaguanine (preQ1-tRNA) to give epoxyqueuosine (oQ-tRNA). This is S-adenosylmethionine:tRNA ribosyltransferase-isomerase from Pseudomonas aeruginosa (strain LESB58).